Consider the following 102-residue polypeptide: Biotrophy-associated secreted protein 2 (102 aa).

Residues 1–19 form the signal peptide; sequence MVRVSTFAAILAMALSVTA. A glycan (N-linked (GlcNAc...) asparagine) is linked at N46.

The protein resides in the secreted. Functionally, secreted effector involved in biotrophic colonization of plant cells. The protein is Biotrophy-associated secreted protein 2 of Pyricularia oryzae (strain 70-15 / ATCC MYA-4617 / FGSC 8958) (Rice blast fungus).